We begin with the raw amino-acid sequence, 245 residues long: Endonuclease III (245 aa).

The HhH domain maps to 119–138 (MVDLFTLPGVGRKTANVILG). 4 residues coordinate [4Fe-4S] cluster: cysteine 198, cysteine 205, cysteine 208, and cysteine 214.

The protein belongs to the Nth/MutY family. It depends on [4Fe-4S] cluster as a cofactor.

The catalysed reaction is 2'-deoxyribonucleotide-(2'-deoxyribose 5'-phosphate)-2'-deoxyribonucleotide-DNA = a 3'-end 2'-deoxyribonucleotide-(2,3-dehydro-2,3-deoxyribose 5'-phosphate)-DNA + a 5'-end 5'-phospho-2'-deoxyribonucleoside-DNA + H(+). In terms of biological role, DNA repair enzyme that has both DNA N-glycosylase activity and AP-lyase activity. The DNA N-glycosylase activity releases various damaged pyrimidines from DNA by cleaving the N-glycosidic bond, leaving an AP (apurinic/apyrimidinic) site. The AP-lyase activity cleaves the phosphodiester bond 3' to the AP site by a beta-elimination, leaving a 3'-terminal unsaturated sugar and a product with a terminal 5'-phosphate. The polypeptide is Endonuclease III (Mycobacterium leprae (strain TN)).